A 191-amino-acid chain; its full sequence is dTTP/UTP pyrophosphatase (191 aa).

Catalysis depends on Asp68, which acts as the Proton acceptor.

It belongs to the Maf family. YhdE subfamily. It depends on a divalent metal cation as a cofactor.

The protein localises to the cytoplasm. It carries out the reaction dTTP + H2O = dTMP + diphosphate + H(+). It catalyses the reaction UTP + H2O = UMP + diphosphate + H(+). Nucleoside triphosphate pyrophosphatase that hydrolyzes dTTP and UTP. May have a dual role in cell division arrest and in preventing the incorporation of modified nucleotides into cellular nucleic acids. In Thermoanaerobacter pseudethanolicus (strain ATCC 33223 / 39E) (Clostridium thermohydrosulfuricum), this protein is dTTP/UTP pyrophosphatase.